Here is a 525-residue protein sequence, read N- to C-terminus: Mitochondrial-processing peptidase subunit alpha (525 aa).

The N-terminal 33 residues, Met-1–Phe-33, are a transit peptide targeting the mitochondrion. At Lys-64 the chain carries N6-succinyllysine. The residue at position 299 (Lys-299) is an N6-acetyllysine.

It belongs to the peptidase M16 family. Heterodimer of PMPCA (alpha) and PMPCB (beta) subunits, forming the mitochondrial processing protease (MPP) in which PMPCA is involved in substrate recognition and binding and PMPCB is the catalytic subunit.

It is found in the mitochondrion matrix. The protein resides in the mitochondrion inner membrane. Substrate recognition and binding subunit of the essential mitochondrial processing protease (MPP), which cleaves the mitochondrial sequence off newly imported precursors proteins. The protein is Mitochondrial-processing peptidase subunit alpha (PMPCA) of Pongo abelii (Sumatran orangutan).